The following is a 96-amino-acid chain: Large ribosomal subunit protein eL14 (96 aa).

The protein belongs to the eukaryotic ribosomal protein eL14 family.

The protein is Large ribosomal subunit protein eL14 of Sulfurisphaera tokodaii (strain DSM 16993 / JCM 10545 / NBRC 100140 / 7) (Sulfolobus tokodaii).